Consider the following 254-residue polypeptide: Metallo-beta-lactamase type 2 (254 aa).

Positions 1–27 are cleaved as a signal peptide; it reads MMKGWMKCGLAGAVVLMASFWGGSVRA. A Zn(2+)-binding site is contributed by Asp99. The substrate site is built by Thr135 and His174. Position 193 (Cys193) interacts with Zn(2+). Substrate is bound by residues Lys196 and Asn201. Zn(2+) is bound at residue His231.

It belongs to the metallo-beta-lactamase superfamily. Class-B beta-lactamase family. In terms of assembly, monomer. Zn(2+) is required as a cofactor.

The protein localises to the periplasm. It catalyses the reaction a beta-lactam + H2O = a substituted beta-amino acid. Competitively inhibited by mercaptophosphonate and pyridine carboxylate derivatives. Also inhibited by the binding of a second zinc ion and by chelating agents such as EDTA. Confers resistance to the different beta-lactams antibiotics (penicillin, cephalosporin and carbapenem) via the hydrolysis of the beta-lactam ring. It is able to hydrolyze penicillin and imipenem, but is much less active against cephalothin, cefotaxime, meropenem and ceftazidime. In Aeromonas hydrophila, this protein is Metallo-beta-lactamase type 2.